Here is a 120-residue protein sequence, read N- to C-terminus: Large ribosomal subunit protein uL18 (120 aa).

This sequence belongs to the universal ribosomal protein uL18 family. In terms of assembly, part of the 50S ribosomal subunit; part of the 5S rRNA/L5/L18/L25 subcomplex. Contacts the 5S and 23S rRNAs.

Its function is as follows. This is one of the proteins that bind and probably mediate the attachment of the 5S RNA into the large ribosomal subunit, where it forms part of the central protuberance. This Clostridium botulinum (strain Eklund 17B / Type B) protein is Large ribosomal subunit protein uL18.